The primary structure comprises 493 residues: Cytochrome P450 monooxygenase esdpG (493 aa).

The chain crosses the membrane as a helical span at residues valine 10–leucine 30. Residue cysteine 434 coordinates heme.

The protein belongs to the cytochrome P450 family. The cofactor is heme.

Its subcellular location is the membrane. It functions in the pathway secondary metabolite biosynthesis; terpenoid biosynthesis. Functionally, cytochrome P450 monooxygenasee; part of the cluster that mediates the biosynthesis of shearones, diterpenoid pyrones (DPs) which are structurally diverse meroterpenoids consisting of a diterpene linked by a pyrone, and which may exhibit a range of bioactivities. Whitin the pathway, esdpG takes part in the molecular scaffold modification via the hydroxylation at C-11 and C-12 and can transform shearone A into shearone C and shearone B into shearone D. The molecular scaffold is commonly biosynthesized by a series of enzymes including the non-reducing polyketide synthase (NR-PKS) esdpA that generates an alpha-pyrone; the prenyltransferase esdpC that attaches a geranylgeranyl pyrophosphate (GGPP) produced by the GGPP synthase (GGPPS) esdpD onto the pyrone unit; the FAD-dependent monooxygenase esdpE that converts an olefin on the diterpene unit into an epoxide; and the terpene cyclase esdpB that catalyzes the cyclization reactions to give the molecular backbone shearone A. In the modification steps, esdpF oxidizes the hydroxy group to a ketone at C-3 and esdpG then attaches hydroxy groups at both C-11 and C-12. After that, esdpI hydroxylates at C-20 and esdpH hydroxylates at C-6'. The ether bridge is generated by nucleophilic attack of the hydroxy group at C-20 to the carbonyl carbon at C-3. EsdpH can also functions prior to esdpI. The different combinations of these modification enzymes lead to the production of diverse shearone derivatives, shearone I being the end product of the pathway. The alpha-ketoglutarate-dependent dioxygenase esdpJ seems not to be involved in this pathway. The chain is Cytochrome P450 monooxygenase esdpG from Penicillium shearii (Eupenicillium shearii).